A 277-amino-acid chain; its full sequence is Chitosanase (277 aa).

Residues 1–35 form the signal peptide; sequence MKISMQKADFWKKAAISLLVFTMFFTLMMSETVFA. Glu54 acts as the Proton donor in catalysis. The Nucleophile role is filled by Asp70.

It belongs to the glycosyl hydrolase 46 family.

The protein localises to the secreted. It carries out the reaction Endohydrolysis of beta-(1-&gt;4)-linkages between D-glucosamine residues in a partly acetylated chitosan.. In terms of biological role, aids in the defense against invading fungal pathogens by degrading their cell wall chitosan. The sequence is that of Chitosanase (csn) from Bacillus subtilis (strain 168).